The chain runs to 452 residues: Caspase-2 (452 aa).

Ala-2 is modified (N-acetylalanine). Positions 2 to 169 are excised as a propeptide; the sequence is AAPSAGSWST…TVEHSLDNKD (168 aa). The CARD domain maps to 32-121; that stretch reads MHPHHQETLK…GHLEDMLLTT (90 aa). The residue at position 157 (Ser-157) is a Phosphoserine. Active-site residues include His-277 and Cys-320. A propeptide spanning residues 326–333 is cleaved from the precursor; the sequence is DRGVDQQD. The segment covering 327–336 has biased composition (basic and acidic residues); the sequence is RGVDQQDGKN. The disordered stretch occupies residues 327–354; the sequence is RGVDQQDGKNHAGSPGCEESDAGKEKLP. Ser-340 bears the Phosphoserine mark.

This sequence belongs to the peptidase C14A family. Heterotetramer that consists of two anti-parallel arranged heterodimers, each one formed by a p18 subunit and a p12 subunit. Forms a complex named the PIDDosome with PIDD1 and CRADD. Interacts with NOL3 (via CARD domain); inhibits CASP2 activity in a phosphorylation-dependent manner. Post-translationally, the mature protease can process its own propeptide, but not that of other caspases. In terms of tissue distribution, expressed at higher levels in the embryonic lung, liver and kidney than in the heart and brain. In adults, higher level expression is seen in the placenta, lung, kidney, and pancreas than in the heart, brain, liver and skeletal muscle.

The catalysed reaction is Strict requirement for an Asp residue at P1, with 316-Asp being essential for proteolytic activity and has a preferred cleavage sequence of Val-Asp-Val-Ala-Asp-|-.. Functionally, is a regulator of the cascade of caspases responsible for apoptosis execution. Might function by either activating some proteins required for cell death or inactivating proteins necessary for cell survival. Associates with PIDD1 and CRADD to form the PIDDosome, a complex that activates CASP2 and triggers apoptosis in response to genotoxic stress. Acts as a positive regulator of apoptosis. Its function is as follows. Acts as a negative regulator of apoptosis. In terms of biological role, may function as an endogenous apoptosis inhibitor that antagonizes caspase activation and cell death. This is Caspase-2 (CASP2) from Homo sapiens (Human).